The sequence spans 350 residues: Cephaeline 6'-O-methyltransferase CiOMT (350 aa).

The S-adenosyl-L-methionine site is built by G193, D216, D236, M237, and K250. H254 (proton acceptor) is an active-site residue.

Belongs to the class I-like SAM-binding methyltransferase superfamily. Cation-independent O-methyltransferase family.

The protein resides in the cytoplasm. It is found in the cytosol. It catalyses the reaction 7'-O-demethylcephaeline + S-adenosyl-L-methionine = cephaeline + S-adenosyl-L-homocysteine + H(+). The catalysed reaction is cephaeline + S-adenosyl-L-methionine = emetine + S-adenosyl-L-homocysteine + H(+). It functions in the pathway alkaloid biosynthesis. With respect to regulation, inhibited by Co(2+), Ni(2+), Zn(2+) and Mn(2+) ions. O-methyltransferase involved in the biosynthesis of ipecac and benzylisoquinoline monoterpenoid-isoquinoline alkaloids natural products, starting by the condensation of dopamine and secologanin, and including emetine and cephaeline, drugs used both as anti-protozoal (e.g. treatment of ameobiasis) and as emetic agents. Catalyzes successively the 7'-O-methylation of 7'-O-demethylcephaeline to produce cephaeline, and its 6'-O-methylation to produce emetine. The chain is Cephaeline 6'-O-methyltransferase CiOMT from Carapichea ipecacuanha (Ipecac).